Here is a 78-residue protein sequence, read N- to C-terminus: Acyl carrier protein (78 aa).

The 76-residue stretch at 2-77 (SSIEERVKKI…QATSYVEANL (76 aa)) folds into the Carrier domain. Residue S37 is modified to O-(pantetheine 4'-phosphoryl)serine.

The protein belongs to the acyl carrier protein (ACP) family. 4'-phosphopantetheine is transferred from CoA to a specific serine of apo-ACP by AcpS. This modification is essential for activity because fatty acids are bound in thioester linkage to the sulfhydryl of the prosthetic group.

The protein resides in the cytoplasm. It participates in lipid metabolism; fatty acid biosynthesis. In terms of biological role, carrier of the growing fatty acid chain in fatty acid biosynthesis. This is Acyl carrier protein from Hydrogenovibrio crunogenus (strain DSM 25203 / XCL-2) (Thiomicrospira crunogena).